Consider the following 476-residue polypeptide: Glutamate--tRNA ligase (476 aa).

Residues 9–19 (PSPTGTLHIGT) carry the 'HIGH' region motif. The short motif at 248–252 (KLSKR) is the 'KMSKS' region element. K251 serves as a coordination point for ATP.

It belongs to the class-I aminoacyl-tRNA synthetase family. Glutamate--tRNA ligase type 1 subfamily. In terms of assembly, monomer.

The protein localises to the cytoplasm. It carries out the reaction tRNA(Glu) + L-glutamate + ATP = L-glutamyl-tRNA(Glu) + AMP + diphosphate. Functionally, catalyzes the attachment of glutamate to tRNA(Glu) in a two-step reaction: glutamate is first activated by ATP to form Glu-AMP and then transferred to the acceptor end of tRNA(Glu). The protein is Glutamate--tRNA ligase of Prochlorococcus marinus (strain MIT 9313).